The chain runs to 122 residues: Large ribosomal subunit protein uL14 (122 aa).

Belongs to the universal ribosomal protein uL14 family. Part of the 50S ribosomal subunit. Forms a cluster with proteins L3 and L19. In the 70S ribosome, L14 and L19 interact and together make contacts with the 16S rRNA in bridges B5 and B8.

Binds to 23S rRNA. Forms part of two intersubunit bridges in the 70S ribosome. This chain is Large ribosomal subunit protein uL14, found in Shewanella denitrificans (strain OS217 / ATCC BAA-1090 / DSM 15013).